A 547-amino-acid polypeptide reads, in one-letter code: Glucose-6-phosphate isomerase (547 aa).

E352 (proton donor) is an active-site residue. Active-site residues include H383 and K511.

Belongs to the GPI family.

The protein localises to the cytoplasm. It catalyses the reaction alpha-D-glucose 6-phosphate = beta-D-fructose 6-phosphate. The protein operates within carbohydrate biosynthesis; gluconeogenesis. It participates in carbohydrate degradation; glycolysis; D-glyceraldehyde 3-phosphate and glycerone phosphate from D-glucose: step 2/4. Its function is as follows. Catalyzes the reversible isomerization of glucose-6-phosphate to fructose-6-phosphate. This Rhodospirillum rubrum (strain ATCC 11170 / ATH 1.1.1 / DSM 467 / LMG 4362 / NCIMB 8255 / S1) protein is Glucose-6-phosphate isomerase.